The primary structure comprises 275 residues: 2,3,4,5-tetrahydropyridine-2,6-dicarboxylate N-succinyltransferase (275 aa).

Residues Arg-104 and Asp-141 each contribute to the substrate site.

The protein belongs to the transferase hexapeptide repeat family. Homotrimer.

The protein localises to the cytoplasm. It catalyses the reaction (S)-2,3,4,5-tetrahydrodipicolinate + succinyl-CoA + H2O = (S)-2-succinylamino-6-oxoheptanedioate + CoA. Its pathway is amino-acid biosynthesis; L-lysine biosynthesis via DAP pathway; LL-2,6-diaminopimelate from (S)-tetrahydrodipicolinate (succinylase route): step 1/3. The sequence is that of 2,3,4,5-tetrahydropyridine-2,6-dicarboxylate N-succinyltransferase from Actinobacillus succinogenes (strain ATCC 55618 / DSM 22257 / CCUG 43843 / 130Z).